A 173-amino-acid polypeptide reads, in one-letter code: Shikimate kinase 2 (173 aa).

12–17 (GCGKTT) contacts ATP. Residues threonine 16 and aspartate 32 each coordinate Mg(2+). 3 residues coordinate substrate: aspartate 34, arginine 58, and glycine 79. The LID domain stretch occupies residues 112–126 (EENPQDNQRPTLTGR). Arginine 120 serves as a coordination point for ATP. Residue arginine 139 coordinates substrate. Glutamine 155 serves as a coordination point for ATP.

This sequence belongs to the shikimate kinase family. AroL subfamily. Monomer. Requires Mg(2+) as cofactor.

The protein resides in the cytoplasm. The catalysed reaction is shikimate + ATP = 3-phosphoshikimate + ADP + H(+). Its pathway is metabolic intermediate biosynthesis; chorismate biosynthesis; chorismate from D-erythrose 4-phosphate and phosphoenolpyruvate: step 5/7. Functionally, catalyzes the specific phosphorylation of the 3-hydroxyl group of shikimic acid using ATP as a cosubstrate. This is Shikimate kinase 2 from Pectobacterium carotovorum subsp. carotovorum (strain PC1).